The primary structure comprises 283 residues: MLIIETLPLLRQQIRRLRMEGKRVALVPTMGNLHDGHMKLVDEAKARADVVVVSIFVNPMQFDRPEDLARYPRTLQEDCEKLNKRKVDLVFAPSVKEIYPNGTETHTYVDVPGLSTMLEGASRPGHFRGVSTIVSKLFNLVQPDIACFGEKDFQQLALIRKMVADMGFDIEIVGVPIMRAKDGLALSSRNGYLTAEQRKIAPGLYKVLSSIADKLQAGERDLDEIIAIAGQELNEKGFRSDDIQIRDADTLLEISENSKRAVILVAAWLGDARLIDNKIVELA.

An ATP-binding site is contributed by 30 to 37; sequence MGNLHDGH. H37 functions as the Proton donor in the catalytic mechanism. Position 61 (Q61) interacts with (R)-pantoate. A beta-alanine-binding site is contributed by Q61. An ATP-binding site is contributed by 149–152; it reads GEKD. Q155 lines the (R)-pantoate pocket. 186–189 provides a ligand contact to ATP; that stretch reads LSSR.

It belongs to the pantothenate synthetase family. Homodimer.

It localises to the cytoplasm. It carries out the reaction (R)-pantoate + beta-alanine + ATP = (R)-pantothenate + AMP + diphosphate + H(+). It functions in the pathway cofactor biosynthesis; (R)-pantothenate biosynthesis; (R)-pantothenate from (R)-pantoate and beta-alanine: step 1/1. Its function is as follows. Catalyzes the condensation of pantoate with beta-alanine in an ATP-dependent reaction via a pantoyl-adenylate intermediate. The chain is Pantothenate synthetase from Escherichia coli (strain SMS-3-5 / SECEC).